We begin with the raw amino-acid sequence, 360 residues long: Phospho-N-acetylmuramoyl-pentapeptide-transferase (360 aa).

Transmembrane regions (helical) follow at residues 21-41, 73-93, 94-114, 132-152, 168-188, 199-219, 239-259, 263-283, 288-308, and 338-358; these read YLSF…LWMG, TMGG…WADL, SNPY…VGFV, WKYF…YAHG, VMPQ…VGTS, GLAI…AWAT, LVVV…FNTY, VFMG…IAVL, LVLV…ILQV, and VIVR…ATLK.

It belongs to the glycosyltransferase 4 family. MraY subfamily. The cofactor is Mg(2+).

The protein resides in the cell inner membrane. The enzyme catalyses UDP-N-acetyl-alpha-D-muramoyl-L-alanyl-gamma-D-glutamyl-meso-2,6-diaminopimeloyl-D-alanyl-D-alanine + di-trans,octa-cis-undecaprenyl phosphate = di-trans,octa-cis-undecaprenyl diphospho-N-acetyl-alpha-D-muramoyl-L-alanyl-D-glutamyl-meso-2,6-diaminopimeloyl-D-alanyl-D-alanine + UMP. It participates in cell wall biogenesis; peptidoglycan biosynthesis. Its function is as follows. Catalyzes the initial step of the lipid cycle reactions in the biosynthesis of the cell wall peptidoglycan: transfers peptidoglycan precursor phospho-MurNAc-pentapeptide from UDP-MurNAc-pentapeptide onto the lipid carrier undecaprenyl phosphate, yielding undecaprenyl-pyrophosphoryl-MurNAc-pentapeptide, known as lipid I. This chain is Phospho-N-acetylmuramoyl-pentapeptide-transferase, found in Vibrio atlanticus (strain LGP32) (Vibrio splendidus (strain Mel32)).